The sequence spans 228 residues: RNA chaperone ProQ (228 aa).

The interval 107–178 is disordered; sequence KARVQAQRAE…REEKHTPVSD (72 aa). Composition is skewed to basic and acidic residues over residues 117-136 and 146-175; these read QQAK…DAPR and RRKE…KHTP.

It belongs to the ProQ family.

It localises to the cytoplasm. In terms of biological role, RNA chaperone with significant RNA binding, RNA strand exchange and RNA duplexing activities. May regulate ProP activity through an RNA-based, post-transcriptional mechanism. The chain is RNA chaperone ProQ from Salmonella agona (strain SL483).